We begin with the raw amino-acid sequence, 301 residues long: MTLERDAASNVAKVLSEALPYIRRFVGKTLVIKYGGNAMESEELKTGFARDIVLMKAVGINPVVVHGGGPQIGDLLKRLSIESHFIDGMRVTDAQTMDVVEMVLGGQVNKDIVNLINRHGGSAIGLTGKDAELIRAKKLTVTRQTPEMTKPEIIDIGQVGEVVGVNTGLLNMLVKGDFIPVIAPIGVGPDGESYNINADLVAGKVAEALKAEKLILLTNIAGLMNKQGEVLTGLTTEQVDGLIADGTIYGGMLPKIRCALEAVQGGVNSSHIIDGRVPNAVLLEIFTDSGVGTQITNRKRH.

Residues 68–69 (GG), R90, and N195 contribute to the substrate site.

Belongs to the acetylglutamate kinase family. ArgB subfamily.

The protein resides in the cytoplasm. It carries out the reaction N-acetyl-L-glutamate + ATP = N-acetyl-L-glutamyl 5-phosphate + ADP. It functions in the pathway amino-acid biosynthesis; L-arginine biosynthesis; N(2)-acetyl-L-ornithine from L-glutamate: step 2/4. Catalyzes the ATP-dependent phosphorylation of N-acetyl-L-glutamate. The sequence is that of Acetylglutamate kinase from Pseudomonas savastanoi pv. phaseolicola (strain 1448A / Race 6) (Pseudomonas syringae pv. phaseolicola (strain 1448A / Race 6)).